Reading from the N-terminus, the 137-residue chain is Small ribosomal subunit protein uS19 (137 aa).

It belongs to the universal ribosomal protein uS19 family.

Functionally, protein S19 forms a complex with S13 that binds strongly to the 16S ribosomal RNA. The polypeptide is Small ribosomal subunit protein uS19 (Methanospirillum hungatei JF-1 (strain ATCC 27890 / DSM 864 / NBRC 100397 / JF-1)).